Consider the following 223-residue polypeptide: Translation initiation factor 6 (223 aa).

This sequence belongs to the eIF-6 family.

Binds to the 50S ribosomal subunit and prevents its association with the 30S ribosomal subunit to form the 70S initiation complex. This chain is Translation initiation factor 6, found in Sulfurisphaera tokodaii (strain DSM 16993 / JCM 10545 / NBRC 100140 / 7) (Sulfolobus tokodaii).